We begin with the raw amino-acid sequence, 382 residues long: E3 ubiquitin-protein ligase RNF133 (382 aa).

The PA domain maps to 65–167; sequence SSILKRVAGV…IKGMEILHLI (103 aa). A helical membrane pass occupies residues 190–210; it reads YFVSFMIVTTATLAYFTFYHI. An RING-type; atypical zinc finger spans residues 256-297; it reads CVICFEAYKPNEIVRILTCKHFFHKNCIDPWILAHGTCPMCK. Residues 328–382 are disordered; the sequence is TLSPVEEETNYELPPARTSSKVTHVQEHPTSSANAGSQPPEAEETSHPSHGQQVL. Over residues 344–364 the composition is skewed to polar residues; that stretch reads RTSSKVTHVQEHPTSSANAGS.

In terms of assembly, interacts with E3 ligase UBE2J1. Auto-ubiquitinated. In terms of tissue distribution, expression is testis-specific.

It localises to the endoplasmic reticulum membrane. It catalyses the reaction S-ubiquitinyl-[E2 ubiquitin-conjugating enzyme]-L-cysteine + [acceptor protein]-L-lysine = [E2 ubiquitin-conjugating enzyme]-L-cysteine + N(6)-ubiquitinyl-[acceptor protein]-L-lysine.. The protein operates within protein modification; protein ubiquitination. Functionally, has E3 ubiquitin-protein ligase activity. Plays a role in male fecundity through the interaction with the E2 ubituitin-protein ligase UBE2J1. The chain is E3 ubiquitin-protein ligase RNF133 (Rnf133) from Mus musculus (Mouse).